A 614-amino-acid polypeptide reads, in one-letter code: Probable glycerol-3-phosphate dehydrogenase (614 aa).

57–85 (DLVVVGGGSTGAGCALDGATRGLKVALVD) contacts FAD. Positions 595–614 (MECPEEKRHRGERRLPPQEK) are disordered. The span at 598 to 614 (PEEKRHRGERRLPPQEK) shows a compositional bias: basic and acidic residues.

It belongs to the FAD-dependent glycerol-3-phosphate dehydrogenase family. FAD serves as cofactor.

It localises to the cytoplasm. It catalyses the reaction a quinone + sn-glycerol 3-phosphate = dihydroxyacetone phosphate + a quinol. It functions in the pathway polyol metabolism; glycerol degradation via glycerol kinase pathway; glycerone phosphate from sn-glycerol 3-phosphate (anaerobic route): step 1/1. The sequence is that of Probable glycerol-3-phosphate dehydrogenase from Encephalitozoon cuniculi (strain GB-M1) (Microsporidian parasite).